Reading from the N-terminus, the 406-residue chain is Putative 12-oxophytodienoate reductase 12 (406 aa).

FMN-binding positions include 41 to 43 (PLT), Ala-74, and Gln-119. 188-191 (HAAN) is a substrate binding site. FMN is bound by residues Arg-240, Gly-317, and 338-339 (GR).

The protein belongs to the NADH:flavin oxidoreductase/NADH oxidase family. FMN serves as cofactor.

Putative oxophytodienoate reductase that may be involved in the biosynthesis or metabolism of oxylipin signaling molecules. The polypeptide is Putative 12-oxophytodienoate reductase 12 (OPR12) (Oryza sativa subsp. japonica (Rice)).